The chain runs to 400 residues: MTVVDIKIGNKYRIGRKIGSGSFGQIYLGLNTVNGEQVAVKLEPLKARHHQLEYEFRVYNILKGNIGIPTIRWFGVTNSYNAMVMDLLGPSLEDLFCYCGRKFTLKTVLLLADQLISRIEYVHSKSFLHRDIKPDNFLMKKHSNVVTMIDFGLAKKYRDFKTHVHIPYRDNKNLTGTARYASINTHIGIEQSRRDDLESLGYVLLYFCRGSLPWQGLQADTKEQKYQRIRDTKIGTPLEVLCKGLPEEFITYMCYTRQLSFTEKPNYAYLRKLFRDLLIRKGYQYDYVFDWMILKYQKRAAAAAAASATAPPQVTSPMVSQTQPVNPITPNYSSIPLPAERNPKTPQSFSTNIVQCASPSPLPLSFRSPVPNKDYEYIPSSLQPQYSAQLRRVLDEEPAP.

In terms of domain architecture, Protein kinase spans 12 to 278 (YRIGRKIGSG…YLRKLFRDLL (267 aa)). Residues 18 to 26 (IGSGSFGQI) and K41 contribute to the ATP site. D131 (proton acceptor) is an active-site residue. The disordered stretch occupies residues 330-352 (PNYSSIPLPAERNPKTPQSFSTN).

Belongs to the protein kinase superfamily. CK1 Ser/Thr protein kinase family. Casein kinase I subfamily.

It is found in the nucleus. The enzyme catalyses L-seryl-[protein] + ATP = O-phospho-L-seryl-[protein] + ADP + H(+). The catalysed reaction is L-threonyl-[protein] + ATP = O-phospho-L-threonyl-[protein] + ADP + H(+). Its function is as follows. Involved in DNA repair. May regulate the activity of protein(s) involved in double strand break repair caused by gamma rays. This chain is Casein kinase I homolog hhp2 (hhp2), found in Schizosaccharomyces pombe (strain 972 / ATCC 24843) (Fission yeast).